The primary structure comprises 46 residues: Protein PsbN (46 aa).

Residues 10–30 (VSIAVLTALLGLTGFGIYTAF) traverse the membrane as a helical segment.

This sequence belongs to the PsbN family.

Its subcellular location is the cellular thylakoid membrane. In terms of biological role, may play a role in photosystem I and II biogenesis. The polypeptide is Protein PsbN (Synechococcus sp. (strain RCC307)).